Consider the following 436-residue polypeptide: Ribosomal protein uS12 methylthiotransferase RimO (436 aa).

The 113-residue stretch at 2–114 (PNLYLVSLGC…IDEMILKKQN (113 aa)) folds into the MTTase N-terminal domain. Positions 11, 45, 77, 146, 150, and 153 each coordinate [4Fe-4S] cluster. The Radical SAM core domain occupies 132–363 (TGSSYHAYIK…IKKQIEGSFK (232 aa)). The TRAM domain maps to 363-434 (KSLVGEVIKV…KDKLIGEIIC (72 aa)).

Belongs to the methylthiotransferase family. RimO subfamily. [4Fe-4S] cluster serves as cofactor.

The protein resides in the cytoplasm. It carries out the reaction L-aspartate(89)-[ribosomal protein uS12]-hydrogen + (sulfur carrier)-SH + AH2 + 2 S-adenosyl-L-methionine = 3-methylsulfanyl-L-aspartate(89)-[ribosomal protein uS12]-hydrogen + (sulfur carrier)-H + 5'-deoxyadenosine + L-methionine + A + S-adenosyl-L-homocysteine + 2 H(+). In terms of biological role, catalyzes the methylthiolation of an aspartic acid residue of ribosomal protein uS12. The polypeptide is Ribosomal protein uS12 methylthiotransferase RimO (Campylobacter fetus subsp. fetus (strain 82-40)).